The primary structure comprises 168 residues: uncharacterized protein (168 aa).

CBS domains follow at residues 20–77 (IMKK…NEDL) and 117–168 (MTRK…EALI).

This is an uncharacterized protein from Methanocaldococcus jannaschii (strain ATCC 43067 / DSM 2661 / JAL-1 / JCM 10045 / NBRC 100440) (Methanococcus jannaschii).